The following is a 1043-amino-acid chain: V(D)J recombination-activating protein 1 (1043 aa).

The tract at residues 1–288 (MAASFPPTLG…LAVDFPEHFV (288 aa)) is interaction with importin alpha-1. The segment covering 40–54 (KTPEEAQKEKKDSFE) has biased composition (basic and acidic residues). Residues 40–80 (KTPEEAQKEKKDSFEGKPSLEQSPAVLDKADGQKPVPTQPL) are disordered. K234 is covalently cross-linked (Glycyl lysine isopeptide (Lys-Gly) (interchain with G-Cter in ubiquitin)). Residues C269, H273, C293, C296, H298, C308, H310, C313, C316, C328, C331, C358, C363, H375, and H379 each contribute to the Zn(2+) site. Residues 293 to 332 (CQICEHILADPVETNCKHVFCRVCILRCLKVMGSYCPSCR) form an RING-type zinc finger. The segment at 354-383 (LMVKCPAKECNEEVSLEKYNHHISSHKESK) adopts an RAG1-type zinc-finger fold. Positions 392–459 (GGRPRQHLLS…QADELEAIMQ (68 aa)) form a DNA-binding region, NBD. Residues D603, D711, and E965 each contribute to the a divalent metal cation site.

The protein belongs to the RAG1 family. In terms of assembly, homodimer. Component of the RAG complex composed of core components RAG1 and RAG2, and associated component HMGB1 or HMGB2. Interacts with DCAF1, leading to recruitment of the CUL4A-RBX1-DDB1-DCAF1/VPRBP complex to ubiquitinate proteins and limit error-prone repair during V(D)J recombination. Requires Mg(2+) as cofactor. Mn(2+) serves as cofactor. Autoubiquitinated in the presence of CDC34/UBCH3. Maturing lymphoid cells.

It localises to the nucleus. The catalysed reaction is S-ubiquitinyl-[E2 ubiquitin-conjugating enzyme]-L-cysteine + [acceptor protein]-L-lysine = [E2 ubiquitin-conjugating enzyme]-L-cysteine + N(6)-ubiquitinyl-[acceptor protein]-L-lysine.. Catalytic component of the RAG complex, a multiprotein complex that mediates the DNA cleavage phase during V(D)J recombination. V(D)J recombination assembles a diverse repertoire of immunoglobulin and T-cell receptor genes in developing B and T-lymphocytes through rearrangement of different V (variable), in some cases D (diversity), and J (joining) gene segments. In the RAG complex, RAG1 mediates the DNA-binding to the conserved recombination signal sequences (RSS) and catalyzes the DNA cleavage activities by introducing a double-strand break between the RSS and the adjacent coding segment. RAG2 is not a catalytic component but is required for all known catalytic activities. DNA cleavage occurs in 2 steps: a first nick is introduced in the top strand immediately upstream of the heptamer, generating a 3'-hydroxyl group that can attack the phosphodiester bond on the opposite strand in a direct transesterification reaction, thereby creating 4 DNA ends: 2 hairpin coding ends and 2 blunt, 5'-phosphorylated ends. The chromatin structure plays an essential role in the V(D)J recombination reactions and the presence of histone H3 trimethylated at 'Lys-4' (H3K4me3) stimulates both the nicking and haipinning steps. The RAG complex also plays a role in pre-B cell allelic exclusion, a process leading to expression of a single immunoglobulin heavy chain allele to enforce clonality and monospecific recognition by the B-cell antigen receptor (BCR) expressed on individual B-lymphocytes. The introduction of DNA breaks by the RAG complex on one immunoglobulin allele induces ATM-dependent repositioning of the other allele to pericentromeric heterochromatin, preventing accessibility to the RAG complex and recombination of the second allele. In addition to its endonuclease activity, RAG1 also acts as an E3 ubiquitin-protein ligase that mediates monoubiquitination of histone H3. Histone H3 monoubiquitination is required for the joining step of V(D)J recombination. Mediates polyubiquitination of KPNA1. This chain is V(D)J recombination-activating protein 1 (RAG1), found in Homo sapiens (Human).